The chain runs to 152 residues: Transcriptional regulator MraZ (152 aa).

SpoVT-AbrB domains lie at 5–52 (ASAI…PIHE) and 81–124 (AHEV…DEQS).

Belongs to the MraZ family. Forms oligomers.

It localises to the cytoplasm. The protein localises to the nucleoid. This Shewanella baltica (strain OS223) protein is Transcriptional regulator MraZ.